Consider the following 367-residue polypeptide: 2-aminoethylphosphonate--pyruvate transaminase (367 aa).

Lysine 194 carries the N6-(pyridoxal phosphate)lysine modification.

The protein belongs to the class-V pyridoxal-phosphate-dependent aminotransferase family. PhnW subfamily. Homodimer. The cofactor is pyridoxal 5'-phosphate.

It catalyses the reaction (2-aminoethyl)phosphonate + pyruvate = phosphonoacetaldehyde + L-alanine. Functionally, involved in phosphonate degradation. The polypeptide is 2-aminoethylphosphonate--pyruvate transaminase (Salmonella gallinarum (strain 287/91 / NCTC 13346)).